The following is a 486-amino-acid chain: Probable transporter MCH1 (486 aa).

A run of 6 helical transmembrane segments spans residues 31-51 (ISFF…LFSL), 69-89 (FIAS…GYLA), 91-111 (CYGP…SYFV), 132-152 (FGIC…SSLL), 164-184 (LAIS…SQLM), and 204-224 (FFGV…SVVS). Positions 236–260 (EMEEADEESPLMTSRSRHSHHSCED) are disordered. A helical membrane pass occupies residues 280–300 (FINFLKDKSAWLLLASLILNI). Asparagine 322 carries an N-linked (GlcNAc...) asparagine glycan. Transmembrane regions (helical) follow at residues 327–348 (VSIM…SDYL) and 357–377 (ICRV…QFMV). A glycan (N-linked (GlcNAc...) asparagine) is linked at asparagine 390. 2 helical membrane-spanning segments follow: residues 395–415 (GGLF…DMMG) and 417–437 (TWGS…IFYG). Asparagine 457 carries N-linked (GlcNAc...) asparagine glycosylation. Residues 458–478 (LTAVGLSVSLILIIIVWKGIW) form a helical membrane-spanning segment.

The protein belongs to the major facilitator superfamily.

It is found in the vacuole membrane. In terms of biological role, probable transporter. The sequence is that of Probable transporter MCH1 (MCH1) from Debaryomyces hansenii (strain ATCC 36239 / CBS 767 / BCRC 21394 / JCM 1990 / NBRC 0083 / IGC 2968) (Yeast).